Reading from the N-terminus, the 187-residue chain is Elongation factor P (187 aa).

It belongs to the elongation factor P family.

The protein resides in the cytoplasm. The protein operates within protein biosynthesis; polypeptide chain elongation. In terms of biological role, involved in peptide bond synthesis. Stimulates efficient translation and peptide-bond synthesis on native or reconstituted 70S ribosomes in vitro. Probably functions indirectly by altering the affinity of the ribosome for aminoacyl-tRNA, thus increasing their reactivity as acceptors for peptidyl transferase. This is Elongation factor P from Frankia casuarinae (strain DSM 45818 / CECT 9043 / HFP020203 / CcI3).